We begin with the raw amino-acid sequence, 361 residues long: sn-glycerol-3-phosphate import ATP-binding protein UgpC (361 aa).

Positions 4-235 constitute an ABC transporter domain; the sequence is LSLKGVRKSY…PATVFVAGFI (232 aa). 37–44 lines the ATP pocket; sequence GPSGCGKS.

This sequence belongs to the ABC transporter superfamily. sn-glycerol-3-phosphate importer (TC 3.A.1.1.3) family. As to quaternary structure, the complex is composed of two ATP-binding proteins (UgpC), two transmembrane proteins (UgpA and UgpE) and a solute-binding protein (UgpB).

Its subcellular location is the cell inner membrane. It carries out the reaction sn-glycerol 3-phosphate(out) + ATP + H2O = sn-glycerol 3-phosphate(in) + ADP + phosphate + H(+). Functionally, part of the ABC transporter complex UgpBAEC involved in sn-glycerol-3-phosphate (G3P) import. Responsible for energy coupling to the transport system. This chain is sn-glycerol-3-phosphate import ATP-binding protein UgpC, found in Burkholderia cenocepacia (strain HI2424).